A 354-amino-acid chain; its full sequence is Protein RecA (354 aa).

67–74 contributes to the ATP binding site; sequence GPESSGKT. The disordered stretch occupies residues 333-354; sequence MNEFVPSSEEQAEASLSEDHDQ.

This sequence belongs to the RecA family.

Its subcellular location is the cytoplasm. Can catalyze the hydrolysis of ATP in the presence of single-stranded DNA, the ATP-dependent uptake of single-stranded DNA by duplex DNA, and the ATP-dependent hybridization of homologous single-stranded DNAs. It interacts with LexA causing its activation and leading to its autocatalytic cleavage. The protein is Protein RecA of Laribacter hongkongensis (strain HLHK9).